A 440-amino-acid chain; its full sequence is tRNA-2-methylthio-N(6)-dimethylallyladenosine synthase (440 aa).

The 116-residue stretch at 2–117 folds into the MTTase N-terminal domain; that stretch reads KGLYIKTYGC…LPELIVKASR (116 aa). [4Fe-4S] cluster contacts are provided by C11, C47, C80, C157, C161, and C164. Residues 143-374 form the Radical SAM core domain; the sequence is NSQGSSAFLA…QELISKQQLE (232 aa). A TRAM domain is found at 377–440; sequence QSMIGKTIPV…RQNSLLGCAA (64 aa).

This sequence belongs to the methylthiotransferase family. MiaB subfamily. In terms of assembly, monomer. The cofactor is [4Fe-4S] cluster.

It is found in the cytoplasm. The enzyme catalyses N(6)-dimethylallyladenosine(37) in tRNA + (sulfur carrier)-SH + AH2 + 2 S-adenosyl-L-methionine = 2-methylsulfanyl-N(6)-dimethylallyladenosine(37) in tRNA + (sulfur carrier)-H + 5'-deoxyadenosine + L-methionine + A + S-adenosyl-L-homocysteine + 2 H(+). Catalyzes the methylthiolation of N6-(dimethylallyl)adenosine (i(6)A), leading to the formation of 2-methylthio-N6-(dimethylallyl)adenosine (ms(2)i(6)A) at position 37 in tRNAs that read codons beginning with uridine. In Wolbachia pipientis subsp. Culex pipiens (strain wPip), this protein is tRNA-2-methylthio-N(6)-dimethylallyladenosine synthase.